The primary structure comprises 369 residues: DNA polymerase IV 2 (369 aa).

One can recognise a UmuC domain in the interval 17 to 201 (VFHVDMDSFF…LPVSRIPGVG (185 aa)). Residues D21 and D119 each contribute to the Mg(2+) site. Residue E120 is part of the active site.

Belongs to the DNA polymerase type-Y family. In terms of assembly, monomer. Requires Mg(2+) as cofactor.

It is found in the cytoplasm. The catalysed reaction is DNA(n) + a 2'-deoxyribonucleoside 5'-triphosphate = DNA(n+1) + diphosphate. Functionally, poorly processive, error-prone DNA polymerase involved in untargeted mutagenesis. Copies undamaged DNA at stalled replication forks, which arise in vivo from mismatched or misaligned primer ends. These misaligned primers can be extended by PolIV. Exhibits no 3'-5' exonuclease (proofreading) activity. May be involved in translesional synthesis. The polypeptide is DNA polymerase IV 2 (dbh2) (Methanosarcina mazei (strain ATCC BAA-159 / DSM 3647 / Goe1 / Go1 / JCM 11833 / OCM 88) (Methanosarcina frisia)).